The chain runs to 237 residues: Phosphoribosylaminoimidazole-succinocarboxamide synthase (237 aa).

It belongs to the SAICAR synthetase family.

It carries out the reaction 5-amino-1-(5-phospho-D-ribosyl)imidazole-4-carboxylate + L-aspartate + ATP = (2S)-2-[5-amino-1-(5-phospho-beta-D-ribosyl)imidazole-4-carboxamido]succinate + ADP + phosphate + 2 H(+). It participates in purine metabolism; IMP biosynthesis via de novo pathway; 5-amino-1-(5-phospho-D-ribosyl)imidazole-4-carboxamide from 5-amino-1-(5-phospho-D-ribosyl)imidazole-4-carboxylate: step 1/2. This is Phosphoribosylaminoimidazole-succinocarboxamide synthase from Shigella dysenteriae serotype 1 (strain Sd197).